Reading from the N-terminus, the 37-residue chain is Large ribosomal subunit protein bL36c (37 aa).

Belongs to the bacterial ribosomal protein bL36 family.

The protein localises to the plastid. It is found in the chloroplast. This chain is Large ribosomal subunit protein bL36c, found in Acorus calamus (Sweet flag).